Here is a 526-residue protein sequence, read N- to C-terminus: ATP synthase subunit alpha (526 aa).

178–185 is an ATP binding site; sequence GDRQTGKT.

It belongs to the ATPase alpha/beta chains family. In terms of assembly, F-type ATPases have 2 components, CF(1) - the catalytic core - and CF(0) - the membrane proton channel. CF(1) has five subunits: alpha(3), beta(3), gamma(1), delta(1), epsilon(1). CF(0) has four main subunits: a(1), b(1), b'(1) and c(9-12).

It localises to the cell membrane. The catalysed reaction is ATP + H2O + 4 H(+)(in) = ADP + phosphate + 5 H(+)(out). Produces ATP from ADP in the presence of a proton gradient across the membrane. The alpha chain is a regulatory subunit. In Roseiflexus castenholzii (strain DSM 13941 / HLO8), this protein is ATP synthase subunit alpha.